The chain runs to 270 residues: Acyl-[acyl-carrier-protein]--UDP-N-acetylglucosamine O-acyltransferase (270 aa).

Belongs to the transferase hexapeptide repeat family. LpxA subfamily. In terms of assembly, homotrimer.

It is found in the cytoplasm. It carries out the reaction a (3R)-hydroxyacyl-[ACP] + UDP-N-acetyl-alpha-D-glucosamine = a UDP-3-O-[(3R)-3-hydroxyacyl]-N-acetyl-alpha-D-glucosamine + holo-[ACP]. It participates in glycolipid biosynthesis; lipid IV(A) biosynthesis; lipid IV(A) from (3R)-3-hydroxytetradecanoyl-[acyl-carrier-protein] and UDP-N-acetyl-alpha-D-glucosamine: step 1/6. Its function is as follows. Involved in the biosynthesis of lipid A, a phosphorylated glycolipid that anchors the lipopolysaccharide to the outer membrane of the cell. The protein is Acyl-[acyl-carrier-protein]--UDP-N-acetylglucosamine O-acyltransferase of Helicobacter pylori (strain P12).